Reading from the N-terminus, the 150-residue chain is Ribonuclease HI (150 aa).

Positions 1 to 141 constitute an RNase H type-1 domain; the sequence is MKLINAYTDG…VDVLARGQAM (141 aa). Residues D9, E47, D69, and D133 each coordinate Mg(2+).

This sequence belongs to the RNase H family. In terms of assembly, monomer. The cofactor is Mg(2+).

The protein localises to the cytoplasm. It carries out the reaction Endonucleolytic cleavage to 5'-phosphomonoester.. In terms of biological role, endonuclease that specifically degrades the RNA of RNA-DNA hybrids. This Xylella fastidiosa (strain Temecula1 / ATCC 700964) protein is Ribonuclease HI.